The sequence spans 348 residues: tRNA pseudouridine synthase D (348 aa).

Phenylalanine 27 contacts substrate. Aspartate 80 serves as the catalytic Nucleophile. Asparagine 129 contacts substrate. The TRUD domain occupies 155–303; sequence GVPNYFGSQR…VEPARRAVLL (149 aa). Phenylalanine 329 lines the substrate pocket.

This sequence belongs to the pseudouridine synthase TruD family.

It carries out the reaction uridine(13) in tRNA = pseudouridine(13) in tRNA. Responsible for synthesis of pseudouridine from uracil-13 in transfer RNAs. The protein is tRNA pseudouridine synthase D of Pectobacterium atrosepticum (strain SCRI 1043 / ATCC BAA-672) (Erwinia carotovora subsp. atroseptica).